The following is a 293-amino-acid chain: C-type lectin domain family 4 member G (293 aa).

The Cytoplasmic segment spans residues 1–31; the sequence is MDTTRYSKWGGSSEEVPGGPWGRWVHWSRRP. At Ser-12 the chain carries Phosphoserine. The helical; Signal-anchor for type II membrane protein transmembrane segment at 32 to 52 threads the bilayer; that stretch reads LFLALAVLVTTVLWAVILSIL. Residues 53–293 lie on the Extracellular side of the membrane; that stretch reads LSKASTERAA…GWICEKRHNC (241 aa). Asn-73 is a glycosylation site (N-linked (GlcNAc...) asparagine). Positions 96-136 form a coiled coil; that stretch reads SGTQAQLQTTRAELGEAQAKLMEQESALRELRERVTQGLAE. An N-linked (GlcNAc...) asparagine glycan is attached at Asn-159. A C-type lectin domain is found at 172–287; sequence FEGSCYFFSV…CDSEKDGWIC (116 aa). Cys-264 and Cys-278 are disulfide-bonded.

(Microbial infection) Interacts with Japanese encephalitis virus envelope protein E. As to quaternary structure, (Microbial infection) Interacts with ebolavirus glycoprotein. In terms of assembly, (Microbial infection) Interacts with SARS-CoV spike glycoprotein. (Microbial infection) Interacts with lassa virus and Lymphocytic choriomeningitis virus glycoprotein. In terms of tissue distribution, expressed exclusively in fetal and adult liver and in lymph nodes. Specifically expressed by endothelial cells lining lymph node and liver sinuses (at protein level).

The protein localises to the cell membrane. Its function is as follows. Binds mannose, N-acetylglucosamine (GlcNAc) and fucose, but not galactose, in a Ca(2+)-dependent manner, in vitro. (Microbial infection) Acts as a receptor for Japanese encephalitis virus. In terms of biological role, (Microbial infection) Acts as a receptor for Ebolavirus. Functionally, (Microbial infection) Acts as a receptor for SARS-CoV. Its function is as follows. (Microbial infection) Acts as a receptor for Lassa virus and Lymphocytic choriomeningitis virus glycoprotein. The chain is C-type lectin domain family 4 member G (CLEC4G) from Homo sapiens (Human).